A 440-amino-acid polypeptide reads, in one-letter code: tRNA(Ile)-lysidine synthase (440 aa).

Position 31–36 (31–36 (SGGADS)) interacts with ATP.

This sequence belongs to the tRNA(Ile)-lysidine synthase family.

It localises to the cytoplasm. The catalysed reaction is cytidine(34) in tRNA(Ile2) + L-lysine + ATP = lysidine(34) in tRNA(Ile2) + AMP + diphosphate + H(+). Its function is as follows. Ligates lysine onto the cytidine present at position 34 of the AUA codon-specific tRNA(Ile) that contains the anticodon CAU, in an ATP-dependent manner. Cytidine is converted to lysidine, thus changing the amino acid specificity of the tRNA from methionine to isoleucine. The sequence is that of tRNA(Ile)-lysidine synthase from Borreliella burgdorferi (strain ATCC 35210 / DSM 4680 / CIP 102532 / B31) (Borrelia burgdorferi).